The primary structure comprises 63 residues: Small ribosomal subunit protein eS31 (63 aa).

Residues cysteine 31, cysteine 34, cysteine 50, and cysteine 53 each coordinate Zn(2+). The C4-type zinc-finger motif lies at 31 to 53; the sequence is CPRCGSIMAHHMKPVERWACGKC.

It belongs to the eukaryotic ribosomal protein eS31 family. Part of the 30S ribosomal subunit. It depends on Zn(2+) as a cofactor.

The protein is Small ribosomal subunit protein eS31 of Sulfurisphaera tokodaii (strain DSM 16993 / JCM 10545 / NBRC 100140 / 7) (Sulfolobus tokodaii).